The following is a 104-amino-acid chain: Putative Fis-like DNA-binding protein (104 aa).

The segment at residues 80–99 (QTKASELLGLNRGTLRKKLK) is a DNA-binding region (H-T-H motif).

The protein belongs to the transcriptional regulatory Fis family.

This is Putative Fis-like DNA-binding protein from Pseudomonas aeruginosa (strain ATCC 15692 / DSM 22644 / CIP 104116 / JCM 14847 / LMG 12228 / 1C / PRS 101 / PAO1).